Reading from the N-terminus, the 387-residue chain is Phosphoglycerate kinase (387 aa).

Substrate is bound by residues 21–23 (DLN), R36, 59–62 (HLGR), R113, and R146. ATP-binding positions include K197, E314, and 340–343 (GGDT).

It belongs to the phosphoglycerate kinase family. In terms of assembly, monomer.

The protein localises to the cytoplasm. The enzyme catalyses (2R)-3-phosphoglycerate + ATP = (2R)-3-phospho-glyceroyl phosphate + ADP. Its pathway is carbohydrate degradation; glycolysis; pyruvate from D-glyceraldehyde 3-phosphate: step 2/5. The protein is Phosphoglycerate kinase of Pseudomonas putida (strain ATCC 700007 / DSM 6899 / JCM 31910 / BCRC 17059 / LMG 24140 / F1).